Here is a 668-residue protein sequence, read N- to C-terminus: SHC SH2 domain-binding protein 1 (668 aa).

A2 is subject to N-acetylalanine. A phosphoserine mark is found at S31, S44, and S273. PbH1 repeat units follow at residues 428–451, 452–473, 474–496, 497–518, and 526–548; these read GMDV…LIIH, HGKT…TVRT, SAEL…EIYP, GSKC…LIKD, and IPKI…VLVK. S630 carries the post-translational modification Phosphoserine.

In terms of assembly, interacts directly with isoform p52shc of SHC1 via its SH2 domain. Interacts with TRIM71; leading to enhanced SHCBP1 protein stability. Interacts with both members of the centralspindlin complex, KIF23 and RACGAP1. In terms of tissue distribution, expressed in spleen, lung and heart with higher expression in testis. No expression in brain, liver and skeletal muscle. Elevated expression in actively cycling cells.

The protein localises to the midbody. It localises to the cytoplasm. The protein resides in the cytoskeleton. It is found in the spindle. May play a role in signaling pathways governing cellular proliferation, cell growth and differentiation. May be a component of a novel signaling pathway downstream of Shc. Acts as a positive regulator of FGF signaling in neural progenitor cells. This chain is SHC SH2 domain-binding protein 1 (Shcbp1), found in Mus musculus (Mouse).